Reading from the N-terminus, the 63-residue chain is MSLVYMYMYIGVVMSARIQESTNDILKPITCNTNADCAKFCKGPIHNCVYHTCQCVPGNPHCC.

An N-terminal signal peptide occupies residues 1-15 (MSLVYMYMYIGVVMS). 3 disulfides stabilise this stretch: C31-C48, C37-C53, and C41-C55.

Belongs to the DEFL family.

The protein localises to the secreted. The polypeptide is Defensin-like protein 278 (Arabidopsis thaliana (Mouse-ear cress)).